The sequence spans 488 residues: Mannosylglycerate hydrolase MGH1 (488 aa).

Substrate-binding positions include Y94, 98 to 101 (WNWD), Y146, Q167, and G227. The active-site Proton donor is the D229. Substrate contacts are provided by residues R262 and 415-416 (YW). E459 functions as the Proton acceptor in the catalytic mechanism.

It belongs to the glycosyl hydrolase 63 family.

It carries out the reaction (2R)-2-O-(alpha-D-mannosyl)-glycerate + H2O = D-mannose + (R)-glycerate. The catalysed reaction is (2R)-2-O-(alpha-D-glucopyranosyl)-glycerate + H2O = (R)-glycerate + D-glucose. Its activity is regulated as follows. Activity is not dependent on divalent cations, but it is enhanced by Mn(2+). In terms of biological role, catalyzes the hydrolysis of alpha-D-mannosyl-glycerate (MG) to D-glycerate and D-mannose. Can also hydrolyze alpha-D-glucopyranosyl-glycerate (GG)with lower efficiency. The polypeptide is Mannosylglycerate hydrolase MGH1 (Selaginella moellendorffii (Spikemoss)).